Consider the following 194-residue polypeptide: Interferon alpha (194 aa).

Positions 1–23 (MALPSSFLVALVALGCNSVCSLG) are cleaved as a signal peptide. Disulfide bonds link Cys-24/Cys-123 and Cys-52/Cys-166. Residue Asn-102 is glycosylated (N-linked (GlcNAc...) asparagine).

The protein belongs to the alpha/beta interferon family.

It localises to the secreted. Its function is as follows. Produced by macrophages, IFN-alpha have antiviral activities. Interferon stimulates the production of two enzymes: a protein kinase and an oligoadenylate synthetase. The chain is Interferon alpha from Felis catus (Cat).